Reading from the N-terminus, the 574-residue chain is Proline--tRNA ligase (574 aa).

The protein belongs to the class-II aminoacyl-tRNA synthetase family. ProS type 1 subfamily. Homodimer.

The protein resides in the cytoplasm. It catalyses the reaction tRNA(Pro) + L-proline + ATP = L-prolyl-tRNA(Pro) + AMP + diphosphate. Its function is as follows. Catalyzes the attachment of proline to tRNA(Pro) in a two-step reaction: proline is first activated by ATP to form Pro-AMP and then transferred to the acceptor end of tRNA(Pro). As ProRS can inadvertently accommodate and process non-cognate amino acids such as alanine and cysteine, to avoid such errors it has two additional distinct editing activities against alanine. One activity is designated as 'pretransfer' editing and involves the tRNA(Pro)-independent hydrolysis of activated Ala-AMP. The other activity is designated 'posttransfer' editing and involves deacylation of mischarged Ala-tRNA(Pro). The misacylated Cys-tRNA(Pro) is not edited by ProRS. The chain is Proline--tRNA ligase from Nitratidesulfovibrio vulgaris (strain DP4) (Desulfovibrio vulgaris).